Here is a 143-residue protein sequence, read N- to C-terminus: Ribonuclease H (143 aa).

The RNase H type-1 domain maps to 1-140; that stretch reads MKVEIYTDGA…VDALANLGIE (140 aa). Mg(2+) is bound by residues aspartate 8, glutamate 46, aspartate 68, and aspartate 132.

Belongs to the RNase H family. Monomer. It depends on Mg(2+) as a cofactor.

It localises to the cytoplasm. The catalysed reaction is Endonucleolytic cleavage to 5'-phosphomonoester.. In terms of biological role, endonuclease that specifically degrades the RNA of RNA-DNA hybrids. In Legionella pneumophila (strain Paris), this protein is Ribonuclease H.